The sequence spans 507 residues: ATP synthase subunit alpha, chloroplastic (507 aa).

Residue 170–177 (GDRQTGKT) coordinates ATP. Residue Thr257 is modified to Phosphothreonine.

It belongs to the ATPase alpha/beta chains family. As to quaternary structure, F-type ATPases have 2 components, CF(1) - the catalytic core - and CF(0) - the membrane proton channel. CF(1) has five subunits: alpha(3), beta(3), gamma(1), delta(1), epsilon(1). CF(0) has four main subunits: a, b, b' and c.

The protein resides in the plastid. The protein localises to the chloroplast thylakoid membrane. The catalysed reaction is ATP + H2O + 4 H(+)(in) = ADP + phosphate + 5 H(+)(out). Functionally, produces ATP from ADP in the presence of a proton gradient across the membrane. The alpha chain is a regulatory subunit. This Crucihimalaya wallichii (Rock-cress) protein is ATP synthase subunit alpha, chloroplastic.